The sequence spans 176 residues: Flavodoxin 1 (176 aa).

One can recognise a Flavodoxin-like domain in the interval 4 to 165; that stretch reads TGIFFGSDTG…RVEKWVKQIS (162 aa).

The protein belongs to the flavodoxin family. FMN is required as a cofactor.

In terms of biological role, low-potential electron donor to a number of redox enzymes (Potential). Involved in the reactivation of inactive cob(II)alamin in methionine synthase. The chain is Flavodoxin 1 (fldA) from Escherichia coli O157:H7.